We begin with the raw amino-acid sequence, 287 residues long: 4-diphosphocytidyl-2-C-methyl-D-erythritol kinase (287 aa).

Residue K14 is part of the active site. 96 to 106 (PWGAGLGGGSS) lines the ATP pocket. Residue D138 is part of the active site.

It belongs to the GHMP kinase family. IspE subfamily.

The catalysed reaction is 4-CDP-2-C-methyl-D-erythritol + ATP = 4-CDP-2-C-methyl-D-erythritol 2-phosphate + ADP + H(+). The protein operates within isoprenoid biosynthesis; isopentenyl diphosphate biosynthesis via DXP pathway; isopentenyl diphosphate from 1-deoxy-D-xylulose 5-phosphate: step 3/6. Functionally, catalyzes the phosphorylation of the position 2 hydroxy group of 4-diphosphocytidyl-2C-methyl-D-erythritol. The chain is 4-diphosphocytidyl-2-C-methyl-D-erythritol kinase from Methylibium petroleiphilum (strain ATCC BAA-1232 / LMG 22953 / PM1).